Reading from the N-terminus, the 143-residue chain is MATGKTVKDVSPHDFVKAYASHLKRSGKIELPLWTDIVKTGRLKELAPYDPDWYYIRAASMARKIYLRGGLGVGAFRRIYGGSKRNGSRPPHFCKSSGGIARHILQQLETMSIVELDTKGGRRITSSGQRDLDQVAGRIAAES.

The protein belongs to the eukaryotic ribosomal protein eS19 family.

The protein is Small ribosomal subunit protein eS19y (RPS19B) of Arabidopsis thaliana (Mouse-ear cress).